Here is a 244-residue protein sequence, read N- to C-terminus: MKRFAIEFSYDGTNFFGYQGQPNVRTVQGELEKALERIFKERIFTQGAGRTDAGVHANGQVAAFNCPIDRLAAIDIKNALNANLPEDIYVKKAWEVEKNFNPRFRAKKRIYHYLVSTNEKDVFKRNYVWHFKYKLNIEAMRIAARYLEGEHDFSSFKKGNDKKNPIRTVYRIRILNVKKELILIRVEGRSFLRSMVRNIVGSLVRVGLGQWTPEKIKKVLEARSRQEAAGTAPPHGLYLYKVLF.

The active-site Nucleophile is D52. Substrate is bound at residue Y111.

It belongs to the tRNA pseudouridine synthase TruA family. Homodimer.

The enzyme catalyses uridine(38/39/40) in tRNA = pseudouridine(38/39/40) in tRNA. Functionally, formation of pseudouridine at positions 38, 39 and 40 in the anticodon stem and loop of transfer RNAs. The polypeptide is tRNA pseudouridine synthase A (Thermosipho melanesiensis (strain DSM 12029 / CIP 104789 / BI429)).